A 296-amino-acid chain; its full sequence is 4-hydroxybenzoate octaprenyltransferase (296 aa).

8 consecutive transmembrane segments (helical) span residues P28–G48, L52–I72, A102–A122, Y146–A166, G169–Y189, V219–F239, L241–W261, and F275–L295.

The protein belongs to the UbiA prenyltransferase family. Requires Mg(2+) as cofactor.

The protein localises to the cell inner membrane. It carries out the reaction all-trans-octaprenyl diphosphate + 4-hydroxybenzoate = 4-hydroxy-3-(all-trans-octaprenyl)benzoate + diphosphate. The protein operates within cofactor biosynthesis; ubiquinone biosynthesis. Catalyzes the prenylation of para-hydroxybenzoate (PHB) with an all-trans polyprenyl group. Mediates the second step in the final reaction sequence of ubiquinone-8 (UQ-8) biosynthesis, which is the condensation of the polyisoprenoid side chain with PHB, generating the first membrane-bound Q intermediate 3-octaprenyl-4-hydroxybenzoate. This is 4-hydroxybenzoate octaprenyltransferase from Pseudomonas fluorescens (strain Pf0-1).